A 309-amino-acid chain; its full sequence is Ribonuclease Z (309 aa).

The Zn(2+) site is built by His63, His65, Asp67, His68, His145, Asp216, and His274. Asp67 acts as the Proton acceptor in catalysis.

This sequence belongs to the RNase Z family. As to quaternary structure, homodimer. Requires Zn(2+) as cofactor.

The enzyme catalyses Endonucleolytic cleavage of RNA, removing extra 3' nucleotides from tRNA precursor, generating 3' termini of tRNAs. A 3'-hydroxy group is left at the tRNA terminus and a 5'-phosphoryl group is left at the trailer molecule.. Zinc phosphodiesterase, which displays some tRNA 3'-processing endonuclease activity. Probably involved in tRNA maturation, by removing a 3'-trailer from precursor tRNA. The chain is Ribonuclease Z from Streptococcus mutans serotype c (strain ATCC 700610 / UA159).